The sequence spans 805 residues: Putative cation-transporting ATPase MJ1226 (805 aa).

A run of 4 helical transmembrane segments spans residues 53–73, 75–95, 226–246, and 258–278; these read SYFW…SAII, HWVD…VGFW, IGDY…AVEL, and FALV…LSIT. The 4-aspartylphosphate intermediate role is filled by aspartate 311. 6 helical membrane-spanning segments follow: residues 615-637, 641-663, 680-700, 712-734, 747-769, and 773-790; these read YVIY…ILIL, PITA…AIAY, ILML…LIFY, ELQS…VTRI, LLFW…GIFM, and GWDL…WMLI.

This sequence belongs to the cation transport ATPase (P-type) (TC 3.A.3) family. Type IIIA subfamily.

It localises to the cell membrane. The enzyme catalyses ATP + H2O = ADP + phosphate + H(+). This chain is Putative cation-transporting ATPase MJ1226, found in Methanocaldococcus jannaschii (strain ATCC 43067 / DSM 2661 / JAL-1 / JCM 10045 / NBRC 100440) (Methanococcus jannaschii).